Consider the following 231-residue polypeptide: UPF0758 protein YsxA (231 aa).

Residues 109–231 (VIRSPEDGAN…FVSLKEKGYL (123 aa)) form the MPN domain. Zn(2+)-binding residues include His180, His182, and Asp193. Positions 180-193 (HNHPSGDPTPSRED) match the JAMM motif motif.

It belongs to the UPF0758 family.

The protein is UPF0758 protein YsxA (ysxA) of Bacillus subtilis (strain 168).